Here is a 234-residue protein sequence, read N- to C-terminus: Protein rgg8 (234 aa).

The protein localises to the cytoplasm. Its subcellular location is the nucleus. This Schizosaccharomyces pombe (strain 972 / ATCC 24843) (Fission yeast) protein is Protein rgg8 (rgg8).